The following is a 227-amino-acid chain: Cytidylate kinase (227 aa).

12–20 (GPSGAGKGT) is a binding site for ATP.

Belongs to the cytidylate kinase family. Type 1 subfamily.

It localises to the cytoplasm. The catalysed reaction is CMP + ATP = CDP + ADP. The enzyme catalyses dCMP + ATP = dCDP + ADP. The sequence is that of Cytidylate kinase from Shigella boydii serotype 4 (strain Sb227).